Consider the following 288-residue polypeptide: Bifunctional protein FolD (288 aa).

NADP(+) is bound by residues 166–168 and Ile-232; that span reads GAS.

It belongs to the tetrahydrofolate dehydrogenase/cyclohydrolase family. As to quaternary structure, homodimer.

The catalysed reaction is (6R)-5,10-methylene-5,6,7,8-tetrahydrofolate + NADP(+) = (6R)-5,10-methenyltetrahydrofolate + NADPH. It carries out the reaction (6R)-5,10-methenyltetrahydrofolate + H2O = (6R)-10-formyltetrahydrofolate + H(+). The protein operates within one-carbon metabolism; tetrahydrofolate interconversion. Functionally, catalyzes the oxidation of 5,10-methylenetetrahydrofolate to 5,10-methenyltetrahydrofolate and then the hydrolysis of 5,10-methenyltetrahydrofolate to 10-formyltetrahydrofolate. This chain is Bifunctional protein FolD, found in Cronobacter sakazakii (strain ATCC BAA-894) (Enterobacter sakazakii).